The chain runs to 355 residues: Probable protein phosphatase 2C 21 (355 aa).

Residues 23–329 (RFGLSSMQGW…DNMTIILVQF (307 aa)) form the PPM-type phosphatase domain. The Mn(2+) site is built by Asp57, Gly58, Asp272, and Asp320. A disordered region spans residues 329-355 (FKKPNPSETEPEDSKPEPSEDEPSSSS).

Belongs to the PP2C family. It depends on Mg(2+) as a cofactor. Requires Mn(2+) as cofactor.

The catalysed reaction is O-phospho-L-seryl-[protein] + H2O = L-seryl-[protein] + phosphate. It carries out the reaction O-phospho-L-threonyl-[protein] + H2O = L-threonyl-[protein] + phosphate. In Arabidopsis thaliana (Mouse-ear cress), this protein is Probable protein phosphatase 2C 21 (PPC4-2).